Consider the following 351-residue polypeptide: tRNA pseudouridine synthase D (351 aa).

Residue Asp-81 is the Nucleophile of the active site. One can recognise a TRUD domain in the interval 158–304 (GVPNYFGSQR…MRHERRAIEL (147 aa)).

It belongs to the pseudouridine synthase TruD family.

It carries out the reaction uridine(13) in tRNA = pseudouridine(13) in tRNA. Its function is as follows. Responsible for synthesis of pseudouridine from uracil-13 in transfer RNAs. The polypeptide is tRNA pseudouridine synthase D (Aliivibrio fischeri (strain MJ11) (Vibrio fischeri)).